The following is a 262-amino-acid chain: uncharacterized protein (262 aa).

A run of 3 helical transmembrane segments spans residues 4–24 (LIVF…RFLG), 28–48 (VSRF…CLFR), and 62–82 (CYLA…SHIL). A coiled-coil region spans residues 152–181 (EREARAQEHDRISAEVETITSACENLEAAM).

The protein localises to the mitochondrion membrane. This is an uncharacterized protein from Arabidopsis thaliana (Mouse-ear cress).